We begin with the raw amino-acid sequence, 173 residues long: 3-hydroxydecanoyl-[acyl-carrier-protein] dehydratase (173 aa).

Residue His-71 is part of the active site.

The protein belongs to the thioester dehydratase family. FabA subfamily. As to quaternary structure, homodimer.

The protein resides in the cytoplasm. It catalyses the reaction a (3R)-hydroxyacyl-[ACP] = a (2E)-enoyl-[ACP] + H2O. It carries out the reaction (3R)-hydroxydecanoyl-[ACP] = (2E)-decenoyl-[ACP] + H2O. The enzyme catalyses (2E)-decenoyl-[ACP] = (3Z)-decenoyl-[ACP]. The protein operates within lipid metabolism; fatty acid biosynthesis. Necessary for the introduction of cis unsaturation into fatty acids. Catalyzes the dehydration of (3R)-3-hydroxydecanoyl-ACP to E-(2)-decenoyl-ACP and then its isomerization to Z-(3)-decenoyl-ACP. Can catalyze the dehydratase reaction for beta-hydroxyacyl-ACPs with saturated chain lengths up to 16:0, being most active on intermediate chain length. The polypeptide is 3-hydroxydecanoyl-[acyl-carrier-protein] dehydratase (Bradyrhizobium diazoefficiens (strain JCM 10833 / BCRC 13528 / IAM 13628 / NBRC 14792 / USDA 110)).